The sequence spans 97 residues: Small ribosomal subunit protein bS20c (97 aa).

The span at 1-15 shows a compositional bias: polar residues; that stretch reads MSKNVSAIKKNQVSL. A disordered region spans residues 1–20; the sequence is MSKNVSAIKKNQVSLRNKRK.

It belongs to the bacterial ribosomal protein bS20 family.

Its subcellular location is the plastid. It is found in the chloroplast. In terms of biological role, binds directly to 16S ribosomal RNA. This chain is Small ribosomal subunit protein bS20c, found in Gracilaria tenuistipitata var. liui (Red alga).